Reading from the N-terminus, the 177-residue chain is Protein C (177 aa).

The segment covering methionine 1–arginine 10 has biased composition (polar residues). The disordered stretch occupies residues methionine 1–arginine 37.

Belongs to the morbillivirus protein C family.

This chain is Protein C (P/V/C), found in Bos indicus (Zebu).